Here is a 192-residue protein sequence, read N- to C-terminus: Ion-translocating oxidoreductase complex subunit A (192 aa).

A run of 6 helical transmembrane segments spans residues 5–25 (VLLL…FLGL), 39–59 (IGMG…AYLV), 67–87 (LGIE…VVQF), 102–122 (LLGI…VALL), 134–154 (IIYG…FASM), and 171–191 (SIAM…TGLV).

Belongs to the NqrDE/RnfAE family. As to quaternary structure, the complex is composed of six subunits: RnfA, RnfB, RnfC, RnfD, RnfE and RnfG.

The protein resides in the cell inner membrane. Functionally, part of a membrane-bound complex that couples electron transfer with translocation of ions across the membrane. This chain is Ion-translocating oxidoreductase complex subunit A, found in Vibrio parahaemolyticus serotype O3:K6 (strain RIMD 2210633).